Here is a 436-residue protein sequence, read N- to C-terminus: UPF0597 protein YhaM (436 aa).

It belongs to the UPF0597 family.

This is UPF0597 protein YhaM from Escherichia coli O7:K1 (strain IAI39 / ExPEC).